The primary structure comprises 399 residues: DNA polymerase IV (399 aa).

A UmuC domain is found at 5–187; sequence ILHCDLNNFY…LPVEALLYVG (183 aa). Mg(2+) is bound by residues D9 and D105. Residue E106 is part of the active site.

It belongs to the DNA polymerase type-Y family. As to quaternary structure, monomer. Mg(2+) serves as cofactor.

The protein localises to the cytoplasm. It carries out the reaction DNA(n) + a 2'-deoxyribonucleoside 5'-triphosphate = DNA(n+1) + diphosphate. Poorly processive, error-prone DNA polymerase involved in untargeted mutagenesis. Copies undamaged DNA at stalled replication forks, which arise in vivo from mismatched or misaligned primer ends. These misaligned primers can be extended by PolIV. Exhibits no 3'-5' exonuclease (proofreading) activity. May be involved in translesional synthesis, in conjunction with the beta clamp from PolIII. This is DNA polymerase IV from Acetivibrio thermocellus (strain ATCC 27405 / DSM 1237 / JCM 9322 / NBRC 103400 / NCIMB 10682 / NRRL B-4536 / VPI 7372) (Clostridium thermocellum).